Reading from the N-terminus, the 377-residue chain is 4-hydroxy-tetrahydrodipicolinate synthase 2, chloroplastic (377 aa).

The N-terminal 51 residues, 1 to 51 (MMAAQPTANPGVRLGWKAPGALASPPRLALSRSAAAPLASHRVGRGKFSAA), are a transit peptide targeting the chloroplast. T120 serves as a coordination point for pyruvate. The active-site Proton donor/acceptor is the Y206. Catalysis depends on K234, which acts as the Schiff-base intermediate with substrate. I273 is a binding site for pyruvate.

Belongs to the DapA family. Tetramer of modified subunits derived from two genes in different combinations.

Its subcellular location is the plastid. It is found in the chloroplast. The catalysed reaction is L-aspartate 4-semialdehyde + pyruvate = (2S,4S)-4-hydroxy-2,3,4,5-tetrahydrodipicolinate + H2O + H(+). Its pathway is amino-acid biosynthesis; L-lysine biosynthesis via DAP pathway; (S)-tetrahydrodipicolinate from L-aspartate: step 3/4. With respect to regulation, sensitive to lysine inhibition. This inhibition increase in an allosteric manner with increasing concentration of the inhibitor. In terms of biological role, catalyzes the condensation of (S)-aspartate-beta-semialdehyde [(S)-ASA] and pyruvate to 4-hydroxy-tetrahydrodipicolinate (HTPA). The polypeptide is 4-hydroxy-tetrahydrodipicolinate synthase 2, chloroplastic (Triticum aestivum (Wheat)).